Here is a 143-residue protein sequence, read N- to C-terminus: MLQPKRTKFRKAHKGRIHGNAPGGASLNFGAFGLKALEPDRITARQIEAARRAITRHIKRQGRLWIRIFPDVPVSSKPAEVRMGSGKGSPEFWAARVKPGRILFELDGVPGPLARVAFERAMEKLPIKTKVVARFGESIYEDK.

The segment covering 1-17 (MLQPKRTKFRKAHKGRI) has biased composition (basic residues). Residues 1–21 (MLQPKRTKFRKAHKGRIHGNA) are disordered.

It belongs to the universal ribosomal protein uL16 family. In terms of assembly, part of the 50S ribosomal subunit.

Its function is as follows. Binds 23S rRNA and is also seen to make contacts with the A and possibly P site tRNAs. The sequence is that of Large ribosomal subunit protein uL16 from Rhizorhabdus wittichii (strain DSM 6014 / CCUG 31198 / JCM 15750 / NBRC 105917 / EY 4224 / RW1) (Sphingomonas wittichii).